A 752-amino-acid polypeptide reads, in one-letter code: Photosystem I P700 chlorophyll a apoprotein A1 (752 aa).

The next 8 membrane-spanning stretches (helical) occupy residues 73 to 96, 159 to 182, 198 to 222, 294 to 312, 349 to 372, 388 to 414, 436 to 458, and 533 to 551; these read IFSA…FHGA, LYCT…FHYH, MNHH…HLSL, TAHH…GHMY, WHAQ…HHMY, LSLF…IFMV, AIVS…LYIH, and FMVH…LILV. [4Fe-4S] cluster-binding residues include C575 and C584. The next 2 helical transmembrane spans lie at 591–612 and 666–688; these read HVFL…HFSW and LSAY…MFLF. H677 contacts chlorophyll a'. M685 and Y693 together coordinate chlorophyll a. W694 contributes to the phylloquinone binding site. Residues 726–746 traverse the membrane as a helical segment; sequence AVGVAHYLLGGIGTTWAFFLA.

The protein belongs to the PsaA/PsaB family. As to quaternary structure, the PsaA/B heterodimer binds the P700 chlorophyll special pair and subsequent electron acceptors. PSI consists of a core antenna complex that captures photons, and an electron transfer chain that converts photonic excitation into a charge separation. The eukaryotic PSI reaction center is composed of at least 11 subunits. P700 is a chlorophyll a/chlorophyll a' dimer, A0 is one or more chlorophyll a, A1 is one or both phylloquinones and FX is a shared 4Fe-4S iron-sulfur center. is required as a cofactor.

The protein localises to the plastid. The protein resides in the chloroplast thylakoid membrane. It carries out the reaction reduced [plastocyanin] + hnu + oxidized [2Fe-2S]-[ferredoxin] = oxidized [plastocyanin] + reduced [2Fe-2S]-[ferredoxin]. Its function is as follows. PsaA and PsaB bind P700, the primary electron donor of photosystem I (PSI), as well as the electron acceptors A0, A1 and FX. PSI is a plastocyanin/cytochrome c6-ferredoxin oxidoreductase, converting photonic excitation into a charge separation, which transfers an electron from the donor P700 chlorophyll pair to the spectroscopically characterized acceptors A0, A1, FX, FA and FB in turn. Oxidized P700 is reduced on the lumenal side of the thylakoid membrane by plastocyanin or cytochrome c6. The protein is Photosystem I P700 chlorophyll a apoprotein A1 of Porphyra purpurea (Red seaweed).